We begin with the raw amino-acid sequence, 197 residues long: Transcription factor FapR (197 aa).

The protein belongs to the FapR family.

Transcriptional factor involved in regulation of membrane lipid biosynthesis by repressing genes involved in fatty acid and phospholipid metabolism. The protein is Transcription factor FapR of Bacillus cereus (strain B4264).